The sequence spans 320 residues: METQFLVSGRNSNIHCRIDSISSSSLTPKSSPVSTSTPTLVVFPPFKLVSKSLRTRSKPRLTVCFVLEEKELRGKLVVASDDDDGAGEVRKQREKEISASAEKLAQKLARKKSERFTYLVAAVMSSFGITSMAVLSVYYRFSWQMEGGEIPLSEMFGTFALSVGAAVGMEFWARWAHEALWHASLWHMHESHHKPREGPFELNDIFAIINAVPAIALLSYGFFHKGLIPGLCFGAGLGITVFGMAYMFVHDGLVHKRFPVGPIADVPYFRRVAAAHTLHHSDKFNGVPYGLFLGPKELEEVGGLQVLEMEINRRTKNNQS.

Residues 1–78 (METQFLVSGR…EKELRGKLVV (78 aa)) constitute a chloroplast transit peptide. A run of 2 helical transmembrane segments spans residues 118-138 (YLVAAVMSSFGITSMAVLSVY) and 152-172 (LSEMFGTFALSVGAAVGMEFW). A Fatty acid hydroxylase domain is found at 165-292 (AAVGMEFWAR…KFNGVPYGLF (128 aa)). The Histidine box-1 signature appears at 177–182 (HEALWH). The Histidine box-2 signature appears at 189–193 (HESHH). 2 helical membrane-spanning segments follow: residues 204 to 224 (DIFAIINAVPAIALLSYGFFH) and 228 to 248 (IPGLCFGAGLGITVFGMAYMF). The short motif at 250–255 (HDGLVH) is the Histidine box-3 element. A Histidine box-4 motif is present at residues 276 to 280 (HTLHH).

This sequence belongs to the sterol desaturase family.

It localises to the plastid. Its subcellular location is the chloroplast membrane. The catalysed reaction is all-trans-beta-carotene + 4 reduced [2Fe-2S]-[ferredoxin] + 2 O2 + 4 H(+) = all-trans-zeaxanthin + 4 oxidized [2Fe-2S]-[ferredoxin] + 2 H2O. In terms of biological role, nonheme diiron monooxygenase involved in the biosynthesis of xanthophylls. Specific for beta-ring hydroxylations of beta-carotene. Uses ferredoxin as an electron donor. The sequence is that of Beta-carotene 3-hydroxylase, chloroplastic (BHY) from Gentiana lutea (Yellow gentian).